The following is an 862-amino-acid chain: Transcription initiation factor TFIID subunit 4B (862 aa).

Residues 100 to 241 (NTTTIQFPAN…TPSNEPNLKA (142 aa)) form a sufficient for interaction with ZNF628 region. Polar residues predominate over residues 219-237 (VTTLKPSSLGASSTPSNEP). Residues 219–239 (VTTLKPSSLGASSTPSNEPNL) form a disordered region. The TAFH domain maps to 256-353 (LENVKKCKNF…CVQQTSSDMV (98 aa)). The segment at 511-533 (PGPVLSQPAGIPQAVQVKQLVVQ) is required for interaction with P65/RELA. Positions 516 to 556 (SQPAGIPQAVQVKQLVVQQPSGGNEKQVTTISHSSTLTIQK) match the Nuclear export signal motif. Serine 595 is modified (phosphoserine). In terms of domain architecture, Histone-fold spans 653–702 (PFLFIGALQKRILDIGKKHDITELNSDAVNLISQATQERLRGLLEKLTAI). Residues 722-787 (TRSQLKFLEK…LAQIQHRDAN (66 aa)) adopt a coiled-coil conformation. The segment at 830-862 (PRITRICLRDLIFCMEQEREMKYSRALYLALLK) is required for interaction with TAF12.

This sequence belongs to the TAF4 family. TFIID is composed of TATA binding protein (TBP) and a number of TBP-associated factors (TAFs). Heterodimerizes with TAF12/TFII20 via the C-terminal H2A-like histone-fold domain. This heterodimer forms a histone-like octamer with the TAF6/TAFII70-TAF9/TAFII31 heterodimer. Interacts with P65/RELA homodimers and P65/RELA-REL heterodimers. Interaction with POU2AF1, via its C-terminal activation domain, is required for octamer-dependent transcription. Interacts with ZNF628. Post-translationally, under stimulation by forskolin, Isoform 1 is phosphorylated by protein kinase A (PKA). In terms of tissue distribution, preferentially expressed in ovarian granulosa cells (at protein level). Highly expressed in B-cells.

It localises to the nucleus. The protein resides in the cytoplasm. In terms of biological role, cell type-specific subunit of the general transcription factor TFIID that may function as a gene-selective coactivator in certain cells. TFIID is a multimeric protein complex that plays a central role in mediating promoter responses to various activators and repressors. TAF4B is a transcriptional coactivator of the p65/RELA NF-kappa-B subunit. Involved in the activation of a subset of antiapoptotic genes including TNFAIP3. May be involved in regulating folliculogenesis. Through interaction with OCBA/POU2AF1, acts as a coactivator of B-cell-specific transcription. Plays a role in spermiogenesis and oogenesis. This chain is Transcription initiation factor TFIID subunit 4B (TAF4B), found in Homo sapiens (Human).